We begin with the raw amino-acid sequence, 501 residues long: Aldehyde dehydrogenase 1A1 (501 aa).

Ser-2 carries the N-acetylserine modification. Residues Lys-91 and Lys-128 each carry the N6-acetyllysine modification. NAD(+) is bound by residues 167 to 170, 193 to 196, 226 to 227, and 246 to 247; these read IPWN, KPAE, GP, and GS. Position 252 is an N6-acetyllysine (Lys-252). Catalysis depends on Glu-269, which acts as the Proton acceptor. 269-271 provides a ligand contact to NAD(+); the sequence is ELG. The active-site Nucleophile is Cys-303. The mediates interaction with PRMT3 stretch occupies residues 336 to 501; it reads LTPGATQGPQ…VTVKISQKNS (166 aa). Position 337 is a phosphothreonine (Thr-337). 349–353 serves as a coordination point for NAD(+); the sequence is EQYDK. N6-acetyllysine occurs at positions 353 and 367. 400 to 402 is an NAD(+) binding site; the sequence is EIF. Lys-410 carries the post-translational modification N6-acetyllysine. Ser-413 carries the phosphoserine modification. An N6-acetyllysine mark is found at Lys-419 and Lys-495.

It belongs to the aldehyde dehydrogenase family. As to quaternary structure, homotetramer. Interacts with PRMT3; the interaction is direct, inhibits ALDH1A1 aldehyde dehydrogenase activity and is independent of the methyltransferase activity of PRMT3. In terms of processing, the N-terminus is blocked most probably by acetylation.

Its subcellular location is the cytoplasm. It localises to the cytosol. The protein localises to the cell projection. It is found in the axon. The catalysed reaction is an aldehyde + NAD(+) + H2O = a carboxylate + NADH + 2 H(+). The enzyme catalyses all-trans-retinal + NAD(+) + H2O = all-trans-retinoate + NADH + 2 H(+). It catalyses the reaction 9-cis-retinal + NAD(+) + H2O = 9-cis-retinoate + NADH + 2 H(+). It carries out the reaction 11-cis-retinal + NAD(+) + H2O = 11-cis-retinoate + NADH + 2 H(+). The catalysed reaction is 13-cis-retinal + NAD(+) + H2O = 13-cis-retinoate + NADH + 2 H(+). The enzyme catalyses 3-deoxyglucosone + NAD(+) + H2O = 2-dehydro-3-deoxy-D-gluconate + NADH + 2 H(+). It catalyses the reaction (E)-4-hydroxynon-2-enal + NAD(+) + H2O = (E)-4-hydroxynon-2-enoate + NADH + 2 H(+). It carries out the reaction malonaldehyde + NAD(+) + H2O = 3-oxopropanoate + NADH + 2 H(+). The catalysed reaction is hexanal + NAD(+) + H2O = hexanoate + NADH + 2 H(+). The enzyme catalyses propanal + NAD(+) + H2O = propanoate + NADH + 2 H(+). It catalyses the reaction acetaldehyde + NAD(+) + H2O = acetate + NADH + 2 H(+). It carries out the reaction benzaldehyde + NAD(+) + H2O = benzoate + NADH + 2 H(+). The catalysed reaction is 4-aminobutanal + NAD(+) + H2O = 4-aminobutanoate + NADH + 2 H(+). The protein operates within cofactor metabolism; retinol metabolism. Its function is as follows. Cytosolic dehydrogenase that catalyzes the irreversible oxidation of a wide range of aldehydes to their corresponding carboxylic acid. Functions downstream of retinol dehydrogenases and catalyzes the oxidation of retinaldehyde into retinoic acid, the second step in the oxidation of retinol/vitamin A into retinoic acid. This pathway is crucial to control the levels of retinol and retinoic acid, two important molecules which excess can be teratogenic and cytotoxic. Also oxidizes aldehydes resulting from lipid peroxidation like (E)-4-hydroxynon-2-enal/HNE, malonaldehyde and hexanal that form protein adducts and are highly cytotoxic. By participating for instance to the clearance of (E)-4-hydroxynon-2-enal/HNE in the lens epithelium prevents the formation of HNE-protein adducts and lens opacification. Also functions downstream of fructosamine-3-kinase in the fructosamine degradation pathway by catalyzing the oxidation of 3-deoxyglucosone, the carbohydrate product of fructosamine 3-phosphate decomposition, which is itself a potent glycating agent that may react with lysine and arginine side-chains of proteins. Also has an aminobutyraldehyde dehydrogenase activity and is probably part of an alternative pathway for the biosynthesis of GABA/4-aminobutanoate in midbrain, thereby playing a role in GABAergic synaptic transmission. This chain is Aldehyde dehydrogenase 1A1, found in Macaca fascicularis (Crab-eating macaque).